The sequence spans 335 residues: Leukocyte immunoglobulin-like receptor subfamily B member 4A (335 aa).

The signal sequence occupies residues 1–23; it reads MIAMLTVLLYLGLILEPRTAVQA. Topologically, residues 24-238 are extracellular; it reads GHLPKPIIWA…TEDGLETYQK (215 aa). Ig-like C2-type domains follow at residues 42-125 and 124-212; these read YTSV…ENPS and PSLS…KPSN. A disulfide bridge connects residues cysteine 49 and cysteine 98. N-linked (GlcNAc...) asparagine glycosylation is found at asparagine 133 and asparagine 191. A disulfide bond links cysteine 144 and cysteine 196. Residues 239-260 traverse the membrane as a helical segment; that stretch reads ILIGVLVSFLLLFFLLLFLILI. The Cytoplasmic segment spans residues 261–335; sequence GYQYGHKKKA…CIRTQEQNNS (75 aa). 2 consecutive short sequence motifs (ITIM motif) follow at residues 298 to 303 and 320 to 325; these read IVYAQV and VTYAQL.

In terms of assembly, interacts (when tyrosine phosphorylated) with SH2 domain-containing phosphatases PTPN6/SHP-1 and PTPN11/SHP-2; interaction with PTPN6 enhances inhibition of mast cell activation. Post-translationally, tyrosine phosphorylated. In terms of tissue distribution, expressed on mast cells and natural killer cells (at protein level). Expressed on neutrophils (at protein level). Expressed on eosinophils (at protein level). Expressed on dendritic cells (at protein level). Expressed on memory and marginal zone B cells (at protein level). Expressed on CD8 T cells (at protein level). Expressed in the uterus of pregnant mice where it is detected at day 4.0 of pregnancy with levels dropping at day 4.5. Highly expressed in the luminal epithelium of uterine endometrium with lower levels in the glandular epithelium.

It localises to the cell membrane. In terms of biological role, inhibitory receptor involved in the down-regulation of the immune response. Receptor for FN1. Receptor for integrin ITGAV/ITGB3. Inhibits IgE-mediated mast cell activation, at least in part through interaction with ITGAV/ITGB3. Also inhibits KITLG/SCF-mediated mast cell activation. Through interaction with ITGAV/ITGB3, inhibits antibody production by memory and marginal zone B cells, probably by suppressing their differentiation into plasma cells. Inhibits IFNG production by CD8 T cells, CD4 T cells and natural killer cells. Inhibits antigen presentation by dendritic cells to T cells, preventing T cell activation. Inhibits lipopolysaccharide-mediated neutrophil-dependent vascular injury. Suppresses the allergic inflammatory response by inhibiting infiltration of neutrophils and eosinophils and preventing mast cell degranulation. Inhibits lysis by natural killer cells. The chain is Leukocyte immunoglobulin-like receptor subfamily B member 4A from Mus musculus (Mouse).